A 418-amino-acid polypeptide reads, in one-letter code: Actin-related protein 3-A (418 aa).

This sequence belongs to the actin family. ARP3 subfamily. In terms of assembly, component of the Arp2/3 complex composed of actr2/arp2, actr3/arp3, arpc1 (arpc1a or arpc1b), arpc2, arpc3, arpc4 and arpc5.

It is found in the cytoplasm. The protein localises to the cytoskeleton. It localises to the cell projection. Its subcellular location is the nucleus. ATP-binding component of the Arp2/3 complex, a multiprotein complex that mediates actin polymerization upon stimulation by nucleation-promoting factor (NPF). The Arp2/3 complex mediates the formation of branched actin networks in the cytoplasm, providing the force for cell motility. Seems to contact the pointed end of the daughter actin filament. In addition to its role in the cytoplasmic cytoskeleton, the Arp2/3 complex also promotes actin polymerization in the nucleus, thereby regulating gene transcription and repair of damaged DNA. The Arp2/3 complex promotes homologous recombination (HR) repair in response to DNA damage by promoting nuclear actin polymerization, leading to drive motility of double-strand breaks (DSBs). In Xenopus laevis (African clawed frog), this protein is Actin-related protein 3-A.